We begin with the raw amino-acid sequence, 266 residues long: Glucosamine-6-phosphate deaminase (266 aa).

The active-site Proton acceptor; for enolization step is Asp-72. Asp-141 functions as the For ring-opening step in the catalytic mechanism. Residue His-143 is the Proton acceptor; for ring-opening step of the active site. Glu-148 serves as the catalytic For ring-opening step.

Belongs to the glucosamine/galactosamine-6-phosphate isomerase family. NagB subfamily. In terms of assembly, homohexamer.

The enzyme catalyses alpha-D-glucosamine 6-phosphate + H2O = beta-D-fructose 6-phosphate + NH4(+). The protein operates within amino-sugar metabolism; N-acetylneuraminate degradation; D-fructose 6-phosphate from N-acetylneuraminate: step 5/5. Allosterically activated by N-acetylglucosamine 6-phosphate (GlcNAc6P). Its function is as follows. Catalyzes the reversible isomerization-deamination of glucosamine 6-phosphate (GlcN6P) to form fructose 6-phosphate (Fru6P) and ammonium ion. This Salmonella arizonae (strain ATCC BAA-731 / CDC346-86 / RSK2980) protein is Glucosamine-6-phosphate deaminase.